The sequence spans 92 residues: DNA-directed RNA polymerase subunit omega (92 aa).

The protein belongs to the RNA polymerase subunit omega family. In terms of assembly, the RNAP catalytic core consists of 2 alpha, 1 beta, 1 beta' and 1 omega subunit. When a sigma factor is associated with the core the holoenzyme is formed, which can initiate transcription.

It carries out the reaction RNA(n) + a ribonucleoside 5'-triphosphate = RNA(n+1) + diphosphate. Functionally, promotes RNA polymerase assembly. Latches the N- and C-terminal regions of the beta' subunit thereby facilitating its interaction with the beta and alpha subunits. The sequence is that of DNA-directed RNA polymerase subunit omega from Corynebacterium diphtheriae (strain ATCC 700971 / NCTC 13129 / Biotype gravis).